The following is a 394-amino-acid chain: Phosphopentomutase (394 aa).

Mn(2+)-binding residues include Asp13, Asp286, His291, Asp327, His328, and His339.

It belongs to the phosphopentomutase family. Mn(2+) is required as a cofactor.

It is found in the cytoplasm. It carries out the reaction 2-deoxy-alpha-D-ribose 1-phosphate = 2-deoxy-D-ribose 5-phosphate. The catalysed reaction is alpha-D-ribose 1-phosphate = D-ribose 5-phosphate. It functions in the pathway carbohydrate degradation; 2-deoxy-D-ribose 1-phosphate degradation; D-glyceraldehyde 3-phosphate and acetaldehyde from 2-deoxy-alpha-D-ribose 1-phosphate: step 1/2. Isomerase that catalyzes the conversion of deoxy-ribose 1-phosphate (dRib-1-P) and ribose 1-phosphate (Rib-1-P) to deoxy-ribose 5-phosphate (dRib-5-P) and ribose 5-phosphate (Rib-5-P), respectively. This Bacillus mycoides (strain KBAB4) (Bacillus weihenstephanensis) protein is Phosphopentomutase.